Reading from the N-terminus, the 236-residue chain is Ribose-5-phosphate isomerase A (236 aa).

Substrate is bound by residues 31–34, 84–87, and 97–100; these read TGST, DGAD, and KGGG. The active-site Proton acceptor is the Glu-106. Lys-124 provides a ligand contact to substrate.

It belongs to the ribose 5-phosphate isomerase family. As to quaternary structure, homodimer.

The catalysed reaction is aldehydo-D-ribose 5-phosphate = D-ribulose 5-phosphate. The protein operates within carbohydrate degradation; pentose phosphate pathway; D-ribose 5-phosphate from D-ribulose 5-phosphate (non-oxidative stage): step 1/1. Catalyzes the reversible conversion of ribose-5-phosphate to ribulose 5-phosphate. This is Ribose-5-phosphate isomerase A from Polynucleobacter asymbioticus (strain DSM 18221 / CIP 109841 / QLW-P1DMWA-1) (Polynucleobacter necessarius subsp. asymbioticus).